The following is a 573-amino-acid chain: LysM domain-containing protein ARB_01155/01156 (573 aa).

The N-terminal stretch at 1–18 (MIPRNLISGLFLLPFVVA) is a signal peptide. Residues asparagine 46, asparagine 71, and asparagine 283 are each glycosylated (N-linked (GlcNAc...) asparagine). Positions 373-419 (RYYEVVAGDQCNTIALHFGITVDAFLSLNTQIDERCSNLWIAYAYCV) constitute a LysM domain. Residues 375-405 (YEVVAGDQCNTIALHFGITVDAFLSLNTQID) are lysM domain.

The protein resides in the secreted. Might have a role in sequestration of chitin oligosaccharides (breakdown products of fungal cell walls that are released during invasion and act as triggers of host immunity) to dampen host defense. The protein is LysM domain-containing protein ARB_01155/01156 of Arthroderma benhamiae (strain ATCC MYA-4681 / CBS 112371) (Trichophyton mentagrophytes).